We begin with the raw amino-acid sequence, 264 residues long: Thiazole synthase (264 aa).

Lys-106 functions as the Schiff-base intermediate with DXP in the catalytic mechanism. 1-deoxy-D-xylulose 5-phosphate is bound by residues Gly-167, Ala-193 to Gly-194, and Asn-215 to Ser-216.

It belongs to the ThiG family. In terms of assembly, homotetramer. Forms heterodimers with either ThiH or ThiS.

The protein resides in the cytoplasm. It catalyses the reaction [ThiS sulfur-carrier protein]-C-terminal-Gly-aminoethanethioate + 2-iminoacetate + 1-deoxy-D-xylulose 5-phosphate = [ThiS sulfur-carrier protein]-C-terminal Gly-Gly + 2-[(2R,5Z)-2-carboxy-4-methylthiazol-5(2H)-ylidene]ethyl phosphate + 2 H2O + H(+). The protein operates within cofactor biosynthesis; thiamine diphosphate biosynthesis. In terms of biological role, catalyzes the rearrangement of 1-deoxy-D-xylulose 5-phosphate (DXP) to produce the thiazole phosphate moiety of thiamine. Sulfur is provided by the thiocarboxylate moiety of the carrier protein ThiS. In vitro, sulfur can be provided by H(2)S. The polypeptide is Thiazole synthase (Prochlorococcus marinus (strain MIT 9215)).